The sequence spans 105 residues: Large ribosomal subunit protein eL36 (105 aa).

It belongs to the eukaryotic ribosomal protein eL36 family. As to quaternary structure, component of the large ribosomal subunit.

The protein localises to the cytoplasm. It is found in the cytosol. Its function is as follows. Component of the large ribosomal subunit. The ribosome is a large ribonucleoprotein complex responsible for the synthesis of proteins in the cell. The polypeptide is Large ribosomal subunit protein eL36 (RPL36) (Gallus gallus (Chicken)).